The sequence spans 122 residues: Large ribosomal subunit protein uL14 (122 aa).

Belongs to the universal ribosomal protein uL14 family. As to quaternary structure, part of the 50S ribosomal subunit. Forms a cluster with proteins L3 and L19. In the 70S ribosome, L14 and L19 interact and together make contacts with the 16S rRNA in bridges B5 and B8.

Functionally, binds to 23S rRNA. Forms part of two intersubunit bridges in the 70S ribosome. This chain is Large ribosomal subunit protein uL14, found in Novosphingobium aromaticivorans (strain ATCC 700278 / DSM 12444 / CCUG 56034 / CIP 105152 / NBRC 16084 / F199).